The chain runs to 508 residues: tRNA (guanine(37)-N(1))-methyltransferase (508 aa).

The transit peptide at 1 to 53 (MKFNFWKGLWKPKSLTPTLSHRLYRRMYTPQPPLNREMTVLDRSKFTVSLNLA) directs the protein to the mitochondrion. His-253 serves as a coordination point for S-adenosyl-L-methionine. Over residues 267-284 (RERKQQERAKRENHEKST) the composition is skewed to basic and acidic residues. Residues 267–291 (RERKQQERAKRENHEKSTETAVEPD) are disordered. S-adenosyl-L-methionine is bound by residues 323-324 (DL), 351-352 (DG), and Asn-402.

The protein belongs to the class I-like SAM-binding methyltransferase superfamily. TRM5/TYW2 family. Monomer.

It localises to the mitochondrion matrix. The protein resides in the nucleus. The protein localises to the cytoplasm. The catalysed reaction is guanosine(37) in tRNA + S-adenosyl-L-methionine = N(1)-methylguanosine(37) in tRNA + S-adenosyl-L-homocysteine + H(+). Specifically methylates the N1 position of guanosine-37 in various cytoplasmic and mitochondrial tRNAs. Methylation is not dependent on the nature of the nucleoside 5' of the target nucleoside. This is the first step in the biosynthesis of wybutosine (yW), a modified base adjacent to the anticodon of tRNAs and required for accurate decoding. This is tRNA (guanine(37)-N(1))-methyltransferase from Yarrowia lipolytica (strain CLIB 122 / E 150) (Yeast).